The sequence spans 216 residues: MASLKSLLSGFLLLAGAAQALKFDLEATSSHHSNQRRCIRNFVNKDTLVVVTATLDGYKGDGMNVNMHISDSHGNEYGKAKDIAGEQRIVFTSHHDAAFDVCFENYLTGSKYVENPRRHVELDIDIGADAKDWSAIQATEKLKPLETDLRRIEELVGEVVNEMDYLRAREQKLRDTNESTNNRVKWFGMATTFLLIALWGWQIMYLRAYFRSKHLI.

An N-terminal signal peptide occupies residues 1–20 (MASLKSLLSGFLLLAGAAQA). Over 21–185 (LKFDLEATSS…TNESTNNRVK (165 aa)) the chain is Lumenal. The region spanning 36-126 (RRCIRNFVNK…RRHVELDIDI (91 aa)) is the GOLD domain. The chain crosses the membrane as a helical span at residues 186 to 206 (WFGMATTFLLIALWGWQIMYL). The Cytoplasmic segment spans residues 207-216 (RAYFRSKHLI).

The protein belongs to the EMP24/GP25L family.

Its subcellular location is the endoplasmic reticulum membrane. The protein resides in the golgi apparatus membrane. In terms of biological role, constituent of COPII-coated endoplasmic reticulum-derived transport vesicles. Required for efficient transport of a subset of secretory proteins to the Golgi. Facilitates retrograde transport from the Golgi to the endoplasmic reticulum. In Neurospora crassa (strain ATCC 24698 / 74-OR23-1A / CBS 708.71 / DSM 1257 / FGSC 987), this protein is Endoplasmic reticulum vesicle protein 25 (erv-1).